Reading from the N-terminus, the 132-residue chain is Large ribosomal subunit protein uL14 (132 aa).

It belongs to the universal ribosomal protein uL14 family. Part of the 50S ribosomal subunit. Forms a cluster with proteins L3 and L24e, part of which may contact the 16S rRNA in 2 intersubunit bridges.

In terms of biological role, binds to 23S rRNA. Forms part of two intersubunit bridges in the 70S ribosome. This is Large ribosomal subunit protein uL14 from Methanosarcina acetivorans (strain ATCC 35395 / DSM 2834 / JCM 12185 / C2A).